A 236-amino-acid chain; its full sequence is Eukaryotic translation initiation factor 3 subunit J (236 aa).

The tract at residues 1 to 84 (MADDWESAAD…LREEEAEAER (84 aa)) is disordered. Residues 28-46 (GEDEDEDIKDSWEDEEEKK) are compositionally biased toward acidic residues. Composition is skewed to basic and acidic residues over residues 47–58 (DEEKPTKTEAPA) and 68–77 (AKLEQQALRE).

The protein belongs to the eIF-3 subunit J family. As to quaternary structure, component of the eukaryotic translation initiation factor 3 (eIF-3) complex. The eIF-3 complex interacts with pix.

Its subcellular location is the cytoplasm. Component of the eukaryotic translation initiation factor 3 (eIF-3) complex, which is involved in protein synthesis of a specialized repertoire of mRNAs and, together with other initiation factors, stimulates binding of mRNA and methionyl-tRNAi to the 40S ribosome. The eIF-3 complex specifically targets and initiates translation of a subset of mRNAs involved in cell proliferation. The chain is Eukaryotic translation initiation factor 3 subunit J from Drosophila sechellia (Fruit fly).